The primary structure comprises 122 residues: Small ribosomal subunit protein uS12cz/uS12cy (122 aa).

It belongs to the universal ribosomal protein uS12 family. Part of the 30S ribosomal subunit.

The protein resides in the plastid. It is found in the chloroplast. In terms of biological role, with S4 and S5 plays an important role in translational accuracy. Located at the interface of the 30S and 50S subunits. This chain is Small ribosomal subunit protein uS12cz/uS12cy (rps12-A), found in Triticum aestivum (Wheat).